The chain runs to 143 residues: Antitumor antibiotic C-1027 apoprotein (143 aa).

Residues 1 to 33 (MSLRHMSRRASRFGVVAVASIGLAAAAQSVAFA) form the signal peptide. 2 disulfides stabilise this stretch: cysteine 69–cysteine 78 and cysteine 119–cysteine 124.

The protein belongs to the neocarzinostatin family.

Binds non-covalently to a chromophore which is the cytotoxic and mutagenic component of the antibiotic. The chromophore binds to DNA as a weak intercalator and causes single- and double-strand breaks. The polypeptide is Antitumor antibiotic C-1027 apoprotein (cagA) (Streptomyces globisporus).